Reading from the N-terminus, the 214-residue chain is ER lumen protein-retaining receptor 3 (214 aa).

Residues 1 to 4 (MNVF) lie on the Lumenal side of the membrane. A helical transmembrane segment spans residues 5–24 (RILGDLSHLLAMILLLVKIW). Over 25 to 32 (RSKSCAGI) the chain is Cytoplasmic. The helical transmembrane segment at 33-52 (SGKSQILFALVFTTRYLDLF) threads the bilayer. Residues 47-48 (RY) form an interaction with the K-D-E-L motif on target proteins region. The Lumenal portion of the chain corresponds to 53–58 (SNFISI). The chain crosses the membrane as a helical span at residues 59 to 79 (YNTVMKVVFLLCAYVTVYMIY). At 80–92 (WKFRKTFDIENDT) the chain is on the cytoplasmic side. Residues 93–110 (FRLEFLLVPVTGLSFLVN) traverse the membrane as a helical segment. Residues 111–116 (YSYTPM) lie on the Lumenal side of the membrane. The helical transmembrane segment at 117 to 135 (EVLWTFSIYLESVAILPQL) threads the bilayer. The Cytoplasmic portion of the chain corresponds to 136-149 (FMISKTGEAETITT). The helical transmembrane segment at 150–168 (HYLFFLGLYRLLYLANWIR) threads the bilayer. The interaction with the K-D-E-L motif on target proteins stretch occupies residues 159-169 (RLLYLANWIRR). The Lumenal portion of the chain corresponds to 169–178 (RYQTENFYDQ). The helical transmembrane segment at 179–199 (ISVVSGVVQTIFYCDFFYLYV) threads the bilayer. Over 200-214 (TKVLKGKKLSLPVPV) the chain is Cytoplasmic. Positions 204–207 (KGKK) are important for recycling of cargo proteins with the sequence motif K-D-E-L from the Golgi to the endoplasmic reticulum.

It belongs to the ERD2 family.

Its subcellular location is the endoplasmic reticulum membrane. It is found in the golgi apparatus membrane. It localises to the cytoplasmic vesicle. The protein localises to the COPI-coated vesicle membrane. Functionally, receptor for the C-terminal sequence motif K-D-E-L that is present on endoplasmic reticulum resident proteins and that mediates their recycling from the Golgi back to the endoplasmic reticulum. In Mus musculus (Mouse), this protein is ER lumen protein-retaining receptor 3 (Kdelr3).